Reading from the N-terminus, the 647-residue chain is Threonine--tRNA ligase (647 aa).

Residues 1-61 (MIKITFPDGA…EEDGSIEIVT (61 aa)) form the TGS domain. The tract at residues 240–538 (DHRKLGKELD…LIETYKGAFP (299 aa)) is catalytic. Cys-334, His-385, and His-515 together coordinate Zn(2+).

Belongs to the class-II aminoacyl-tRNA synthetase family. As to quaternary structure, homodimer. The cofactor is Zn(2+).

It localises to the cytoplasm. The enzyme catalyses tRNA(Thr) + L-threonine + ATP = L-threonyl-tRNA(Thr) + AMP + diphosphate + H(+). Catalyzes the attachment of threonine to tRNA(Thr) in a two-step reaction: L-threonine is first activated by ATP to form Thr-AMP and then transferred to the acceptor end of tRNA(Thr). Also edits incorrectly charged L-seryl-tRNA(Thr). In Streptococcus pyogenes serotype M18 (strain MGAS8232), this protein is Threonine--tRNA ligase.